A 464-amino-acid polypeptide reads, in one-letter code: ATP-dependent protease ATPase subunit HslU (464 aa).

ATP contacts are provided by residues valine 18, 60-65, aspartate 277, glutamate 342, and arginine 414; that span reads GVGKTE.

This sequence belongs to the ClpX chaperone family. HslU subfamily. In terms of assembly, a double ring-shaped homohexamer of HslV is capped on each side by a ring-shaped HslU homohexamer. The assembly of the HslU/HslV complex is dependent on binding of ATP.

The protein resides in the cytoplasm. ATPase subunit of a proteasome-like degradation complex; this subunit has chaperone activity. The binding of ATP and its subsequent hydrolysis by HslU are essential for unfolding of protein substrates subsequently hydrolyzed by HslV. HslU recognizes the N-terminal part of its protein substrates and unfolds these before they are guided to HslV for hydrolysis. This chain is ATP-dependent protease ATPase subunit HslU, found in Lactobacillus delbrueckii subsp. bulgaricus (strain ATCC BAA-365 / Lb-18).